The chain runs to 511 residues: Myrosinase 4 (511 aa).

The first 23 residues, 1-23, serve as a signal peptide directing secretion; it reads MAIPKAHYSLAVLVLLFVVVSSS. Cystine bridges form between C31–C450, C39–C445, and C230–C233. N-linked (GlcNAc...) asparagine glycosylation is found at N46 and N53. A beta-D-glucoside is bound by residues Q64, H165, and 210–211; that span reads NQ. A beta-D-glucoside is bound by residues Y351 and E418. E418 acts as the Nucleophile in catalysis. Residue N428 is glycosylated (N-linked (GlcNAc...) asparagine). A beta-D-glucoside-binding positions include W467, 474-475, and F483; that span reads EF. N-linked (GlcNAc...) asparagine glycosylation occurs at N489.

Belongs to the glycosyl hydrolase 1 family. Specifically expressed in roots.

The enzyme catalyses a thioglucoside + H2O = a sugar + a thiol.. It carries out the reaction Hydrolysis of terminal, non-reducing beta-D-glucosyl residues with release of beta-D-glucose.. Its function is as follows. Hydrolyzes sinigrin and, with lower efficiency, p-nitrophenyl beta-D-glucoside. The sequence is that of Myrosinase 4 from Arabidopsis thaliana (Mouse-ear cress).